We begin with the raw amino-acid sequence, 723 residues long: Polyribonucleotide nucleotidyltransferase (723 aa).

Residues Asp488 and Asp494 each contribute to the Mg(2+) site. The KH domain maps to 555–614; sequence PKIITLNIKPEKIKDVIGPGGKQINAIIEETGVKIDIEQDGTVYIASQDQAMNRKAIAII. The region spanning 624 to 692 is the S1 motif domain; it reads GEVYTGKVRR…HQGRVNLSRK (69 aa). Residues 692-723 form a disordered region; sequence KALLEKKEQPEGDKKPQAEKKFYPKTKKPESK. Residues 693-723 show a composition bias toward basic and acidic residues; it reads ALLEKKEQPEGDKKPQAEKKFYPKTKKPESK.

The protein belongs to the polyribonucleotide nucleotidyltransferase family. Mg(2+) is required as a cofactor.

Its subcellular location is the cytoplasm. It carries out the reaction RNA(n+1) + phosphate = RNA(n) + a ribonucleoside 5'-diphosphate. Functionally, involved in mRNA degradation. Catalyzes the phosphorolysis of single-stranded polyribonucleotides processively in the 3'- to 5'-direction. The protein is Polyribonucleotide nucleotidyltransferase of Listeria welshimeri serovar 6b (strain ATCC 35897 / DSM 20650 / CCUG 15529 / CIP 8149 / NCTC 11857 / SLCC 5334 / V8).